Here is a 181-residue protein sequence, read N- to C-terminus: Isopentenyl-diphosphate Delta-isomerase (181 aa).

2 residues coordinate Mn(2+): histidine 25 and histidine 32. In terms of domain architecture, Nudix hydrolase spans 30–164 (PLHLAFSCWL…PWAFSPWMVM (135 aa)). Cysteine 67 is an active-site residue. Mg(2+) is bound at residue cysteine 67. Histidine 69 contributes to the Mn(2+) binding site. Residue glutamate 87 participates in Mg(2+) binding. Mn(2+) contacts are provided by glutamate 114 and glutamate 116. Glutamate 116 is an active-site residue.

Belongs to the IPP isomerase type 1 family. In terms of assembly, homodimer. Mg(2+) serves as cofactor. Requires Mn(2+) as cofactor.

It localises to the cytoplasm. It catalyses the reaction isopentenyl diphosphate = dimethylallyl diphosphate. It functions in the pathway isoprenoid biosynthesis; dimethylallyl diphosphate biosynthesis; dimethylallyl diphosphate from isopentenyl diphosphate: step 1/1. Catalyzes the 1,3-allylic rearrangement of the homoallylic substrate isopentenyl (IPP) to its highly electrophilic allylic isomer, dimethylallyl diphosphate (DMAPP). The polypeptide is Isopentenyl-diphosphate Delta-isomerase (Salmonella choleraesuis (strain SC-B67)).